A 430-amino-acid chain; its full sequence is Pyrroloquinoline quinone-dependent sugar dehydrogenase (430 aa).

The N-terminal stretch at 1 to 23 (MARLAPHTLLLALFVFLFGSCTA) is a signal peptide. N-linked (GlcNAc...) asparagine glycosylation occurs at N25. R57 is a pyrroloquinoline quinone binding site. N94 and N147 each carry an N-linked (GlcNAc...) asparagine glycan. Residue H153 coordinates pyrroloquinoline quinone. N-linked (GlcNAc...) asparagine glycosylation is present at N184. Residue R220 participates in pyrroloquinoline quinone binding. Positions 240 and 242 each coordinate Ca(2+). An intrachain disulfide couples C281 to C316. N306 carries N-linked (GlcNAc...) asparagine glycosylation. H330 contacts pyrroloquinoline quinone. N-linked (GlcNAc...) asparagine glycosylation is present at N341. H350 lines the pyrroloquinoline quinone pocket. An intrachain disulfide couples C388 to C392.

Belongs to the sugar dehydrogenase AA12 family. The cofactor is Ca(2+). Pyrroloquinoline quinone is required as a cofactor.

It is found in the secreted. Pyrroloquinoline quinone (PPQ)-dependent oxidoreductase that catalyzes the oxidation of various sugars such as L-fucose. The chain is Pyrroloquinoline quinone-dependent sugar dehydrogenase from Hypocrea jecorina (strain QM6a) (Trichoderma reesei).